Consider the following 137-residue polypeptide: MLQPKRTKYRKKQKGRCSGLATRGDRVSFGEFGLKATTRGPITSRQIEAARRAINRYIRRGGKIWIRVFPDKPVTEKPLEVRMGKGKGNVDHWCEPIAPGRVLYELEGVSEEVAREAFRRAAAKLPVKTTFVNRTVM.

This sequence belongs to the universal ribosomal protein uL16 family. Part of the 50S ribosomal subunit.

Binds 23S rRNA and is also seen to make contacts with the A and possibly P site tRNAs. The polypeptide is Large ribosomal subunit protein uL16 (Halorhodospira halophila (strain DSM 244 / SL1) (Ectothiorhodospira halophila (strain DSM 244 / SL1))).